The primary structure comprises 316 residues: Taste receptor type 2 member 3 (316 aa).

The Extracellular portion of the chain corresponds to 1–7 (MLGFTEG). A helical membrane pass occupies residues 8 to 28 (IFLVLTVTEFILGNLVNGFIV). Topologically, residues 29–50 (SVNGSHWFKSKKISLSDFIITS) are cytoplasmic. The helical transmembrane segment at 51–71 (LALFRIFLLWIIFTDSLIIVF) threads the bilayer. The Extracellular portion of the chain corresponds to 72–86 (SYHTHDSGIRMQLID). Residues 87-107 (VFWTFTNHFSIWLISCLSVFY) form a helical membrane-spanning segment. At 108–128 (CLKIATFSHPSFLWLKWRASR) the chain is on the cytoplasmic side. A helical membrane pass occupies residues 129 to 149 (VVVGMLWGALVLSCVCTMSLM). Topologically, residues 150 to 186 (NEFKIYSALTGSRDTQNMTEYIRLKRHEYNLMHVLGN) are extracellular. N-linked (GlcNAc...) asparagine glycosylation occurs at N166. The helical transmembrane segment at 187–207 (LWKIPSLIVSLIAYFLLLLSL) threads the bilayer. The Cytoplasmic segment spans residues 208-234 (GKHTQQMQKYSVGSRDQSAEAHRRAMR). A helical transmembrane segment spans residues 235–255 (IILSFLLFFLFYFLSFVILSS). Topologically, residues 256–266 (SRFLPETKIAR) are extracellular. Residues 267–287 (IIGVVITMSYLVGDSLILILG) form a helical membrane-spanning segment. The Cytoplasmic portion of the chain corresponds to 288 to 316 (NNKLKQTFVAILPCECGHPKPGSKRFFAS).

This sequence belongs to the G-protein coupled receptor T2R family.

It localises to the membrane. Its function is as follows. Gustducin-coupled receptor implicated in the perception of bitter compounds in the oral cavity and the gastrointestinal tract. Signals through PLCB2 and the calcium-regulated cation channel TRPM5. The protein is Taste receptor type 2 member 3 of Rattus norvegicus (Rat).